A 344-amino-acid polypeptide reads, in one-letter code: Dihydroorotase (344 aa).

Zn(2+)-binding residues include H13 and H15. Substrate is bound by residues 15–17 (HLR) and N41. Residues K98, H135, and H173 each contribute to the Zn(2+) site. K98 carries the post-translational modification N6-carboxylysine. H135 provides a ligand contact to substrate. Substrate is bound at residue L218. Residue D247 participates in Zn(2+) binding. The active site involves D247. 2 residues coordinate substrate: H251 and A263.

Belongs to the metallo-dependent hydrolases superfamily. DHOase family. Class II DHOase subfamily. As to quaternary structure, homodimer. Zn(2+) is required as a cofactor.

The enzyme catalyses (S)-dihydroorotate + H2O = N-carbamoyl-L-aspartate + H(+). It participates in pyrimidine metabolism; UMP biosynthesis via de novo pathway; (S)-dihydroorotate from bicarbonate: step 3/3. Catalyzes the reversible cyclization of carbamoyl aspartate to dihydroorotate. This chain is Dihydroorotase, found in Neisseria meningitidis serogroup C (strain 053442).